We begin with the raw amino-acid sequence, 380 residues long: Chaperone protein DnaJ (380 aa).

The 65-residue stretch at 5–69 (DYYEILGVSK…QKRAHYDQFG (65 aa)) folds into the J domain. Residues 135–217 (GKETDIEIPR…CGGTGRVKKR (83 aa)) form a CR-type zinc finger. C148, C151, C165, C168, C191, C194, C205, and C208 together coordinate Zn(2+). CXXCXGXG motif repeat units lie at residues 148-155 (CDTCHGTG), 165-172 (CSYCHGTG), 191-198 (CPYCGGTG), and 205-212 (CTTCGGTG).

Belongs to the DnaJ family. Homodimer. The cofactor is Zn(2+).

It localises to the cytoplasm. Its function is as follows. Participates actively in the response to hyperosmotic and heat shock by preventing the aggregation of stress-denatured proteins and by disaggregating proteins, also in an autonomous, DnaK-independent fashion. Unfolded proteins bind initially to DnaJ; upon interaction with the DnaJ-bound protein, DnaK hydrolyzes its bound ATP, resulting in the formation of a stable complex. GrpE releases ADP from DnaK; ATP binding to DnaK triggers the release of the substrate protein, thus completing the reaction cycle. Several rounds of ATP-dependent interactions between DnaJ, DnaK and GrpE are required for fully efficient folding. Also involved, together with DnaK and GrpE, in the DNA replication of plasmids through activation of initiation proteins. This chain is Chaperone protein DnaJ, found in Geobacillus sp. (strain WCH70).